Reading from the N-terminus, the 493-residue chain is Glutamyl-tRNA(Gln) amidotransferase subunit A (493 aa).

Residues Lys-79 and Ser-159 each act as charge relay system in the active site. Ser-183 (acyl-ester intermediate) is an active-site residue.

The protein belongs to the amidase family. GatA subfamily. As to quaternary structure, heterotrimer of A, B and C subunits.

The enzyme catalyses L-glutamyl-tRNA(Gln) + L-glutamine + ATP + H2O = L-glutaminyl-tRNA(Gln) + L-glutamate + ADP + phosphate + H(+). Functionally, allows the formation of correctly charged Gln-tRNA(Gln) through the transamidation of misacylated Glu-tRNA(Gln) in organisms which lack glutaminyl-tRNA synthetase. The reaction takes place in the presence of glutamine and ATP through an activated gamma-phospho-Glu-tRNA(Gln). The chain is Glutamyl-tRNA(Gln) amidotransferase subunit A from Rhizobium etli (strain ATCC 51251 / DSM 11541 / JCM 21823 / NBRC 15573 / CFN 42).